The primary structure comprises 382 residues: S-adenosylmethionine synthase (382 aa).

His-15 contributes to the ATP binding site. Asp-17 provides a ligand contact to Mg(2+). Residue Glu-43 participates in K(+) binding. Glu-56 and Gln-99 together coordinate L-methionine. Residues 99-109 (QSPDINQGVDR) form a flexible loop region. ATP-binding positions include 164–166 (DAK), 230–231 (RF), Asp-239, 245–246 (RK), Ala-262, and Lys-266. Asp-239 is a binding site for L-methionine. Lys-270 provides a ligand contact to L-methionine.

The protein belongs to the AdoMet synthase family. As to quaternary structure, homotetramer; dimer of dimers. The cofactor is Mg(2+). Requires K(+) as cofactor.

It is found in the cytoplasm. It carries out the reaction L-methionine + ATP + H2O = S-adenosyl-L-methionine + phosphate + diphosphate. The protein operates within amino-acid biosynthesis; S-adenosyl-L-methionine biosynthesis; S-adenosyl-L-methionine from L-methionine: step 1/1. In terms of biological role, catalyzes the formation of S-adenosylmethionine (AdoMet) from methionine and ATP. The overall synthetic reaction is composed of two sequential steps, AdoMet formation and the subsequent tripolyphosphate hydrolysis which occurs prior to release of AdoMet from the enzyme. This is S-adenosylmethionine synthase from Glaesserella parasuis serovar 5 (strain SH0165) (Haemophilus parasuis).